A 149-amino-acid chain; its full sequence is Putative pre-16S rRNA nuclease (149 aa).

It belongs to the YqgF nuclease family.

Its subcellular location is the cytoplasm. Could be a nuclease involved in processing of the 5'-end of pre-16S rRNA. This is Putative pre-16S rRNA nuclease from Burkholderia vietnamiensis (strain G4 / LMG 22486) (Burkholderia cepacia (strain R1808)).